A 409-amino-acid polypeptide reads, in one-letter code: N-carbamoyl-L-amino acid amidohydrolase (409 aa).

Positions 79, 90, 125, and 189 each coordinate a divalent metal cation. An N-carbamoyl-L-alpha-amino acid-binding residues include glutamine 192, histidine 225, asparagine 273, arginine 286, and alanine 355. Residues 208–325 (GIAGLIWVKF…TTERLQEMAP (118 aa)) are involved in dimerization. An a divalent metal cation-binding site is contributed by histidine 380.

This sequence belongs to the peptidase M20 family. Homodimer. Mn(2+) is required as a cofactor. Requires Ni(2+) as cofactor. The cofactor is Co(2+). Fe(2+) serves as cofactor.

The catalysed reaction is an N-carbamoyl-L-alpha-amino acid + H2O + 2 H(+) = an L-alpha-amino acid + NH4(+) + CO2. The enzyme catalyses N-carbamoyl-L-methionine + H2O + 2 H(+) = L-methionine + NH4(+) + CO2. It carries out the reaction N-acetyl-L-methionine + H2O = L-methionine + acetate. It catalyses the reaction N-carbamoyl-L-alanine + H2O + 2 H(+) = L-alanine + NH4(+) + CO2. The catalysed reaction is N-carbamoyl-L-glutamate + H2O + 2 H(+) = L-glutamate + NH4(+) + CO2. The enzyme catalyses N-carbamoylglycine + H2O + 2 H(+) = glycine + NH4(+) + CO2. It carries out the reaction N-carbamoyl-L-leucine + H2O + 2 H(+) = L-leucine + NH4(+) + CO2. Its function is as follows. Catalyzes the hydrolysis of aliphatic N-carbamoyl-L-alpha-amino acids to free L-alpha-amino acids. Is strictly L-specific since it is inactive toward N-carbamoyl-D-alpha-amino acids. Is not able to use aromatic N-carbamoyl-L-alpha-amino acids like N-carbamoyl-L-tryptophan and N-carbamoyl-L-phenylalanine as substrates, but is also able to hydrolyze N-acetyl-L-methionine. This Geobacillus stearothermophilus (Bacillus stearothermophilus) protein is N-carbamoyl-L-amino acid amidohydrolase.